Reading from the N-terminus, the 48-residue chain is DNA-directed RNA polymerase subunit Rpo12 (48 aa).

Zn(2+)-binding residues include cysteine 9, cysteine 26, and cysteine 29.

It belongs to the archaeal Rpo12/eukaryotic RPC10 RNA polymerase subunit family. Part of the RNA polymerase complex. Zn(2+) serves as cofactor.

It localises to the cytoplasm. The enzyme catalyses RNA(n) + a ribonucleoside 5'-triphosphate = RNA(n+1) + diphosphate. Its function is as follows. DNA-dependent RNA polymerase (RNAP) catalyzes the transcription of DNA into RNA using the four ribonucleoside triphosphates as substrates. This is DNA-directed RNA polymerase subunit Rpo12 from Saccharolobus islandicus (strain Y.N.15.51 / Yellowstone #2) (Sulfolobus islandicus).